The sequence spans 271 residues: Putative hydro-lyase OCAR_7359/OCA5_c07590 (271 aa).

The protein belongs to the D-glutamate cyclase family.

The protein is Putative hydro-lyase OCAR_7359/OCA5_c07590 of Afipia carboxidovorans (strain ATCC 49405 / DSM 1227 / KCTC 32145 / OM5) (Oligotropha carboxidovorans).